We begin with the raw amino-acid sequence, 193 residues long: UMP-CMP kinase (193 aa).

An ATP-binding site is contributed by 13–18 (GAGKGT). An NMP region spans residues 33 to 63 (SAGDLLRDERKKPDSQYGELIESYIRDGKIV). Residues Arg39, 61 to 63 (KIV), and 93 to 96 (GFPR) contribute to the a ribonucleoside 5'-phosphate site. Residue Asn100 participates in CMP binding. An LID region spans residues 133 to 143 (ERGKSSGRSDD). Residue Arg134 participates in ATP binding. A ribonucleoside 5'-phosphate is bound by residues Arg140 and Arg151. Lys179 provides a ligand contact to ATP.

The protein belongs to the adenylate kinase family. UMP-CMP kinase subfamily. As to quaternary structure, monomer. Requires Mg(2+) as cofactor.

Its subcellular location is the nucleus. It localises to the cytoplasm. The catalysed reaction is CMP + ATP = CDP + ADP. It carries out the reaction dCMP + ATP = dCDP + ADP. It catalyses the reaction UMP + ATP = UDP + ADP. The enzyme catalyses a 2'-deoxyribonucleoside 5'-diphosphate + ATP = a 2'-deoxyribonucleoside 5'-triphosphate + ADP. The catalysed reaction is a ribonucleoside 5'-diphosphate + ATP = a ribonucleoside 5'-triphosphate + ADP. In terms of biological role, catalyzes the phosphorylation of pyrimidine nucleoside monophosphates at the expense of ATP. Plays an important role in de novo pyrimidine nucleotide biosynthesis. Has preference for UMP and CMP as phosphate acceptors. Also displays broad nucleoside diphosphate kinase activity. This Xenopus laevis (African clawed frog) protein is UMP-CMP kinase (cmpk1).